Here is a 762-residue protein sequence, read N- to C-terminus: MQVRTLLTLGKKKVIGNRQCILSLYRKYSNVQSRKAEDQLLRQIFDDQNIAVNQITKRNGIQGVGLFRNHFLSDKDTGFLRLAETASEKCKAVIEDLLLEDTEDGSIVVSKFDRISNLLCSVIDLFEFVRCAHPDKMVVMKAEEAYSYLFELMNTLNTHQGLYEKLKCSLQQTPTLKDTDPEAYTVGRVFLQDFEKSGVNLESSKRNSFVKKSSESATLGRAFFNNSMNRPQRYLTISKQRLAGSDPYFVRSLSKNDKNFIMIPTVGYEGTQALISVANPDVRKEIYMEGHKGTVEEVELLNSYLRSKAEVAKLVGKSSFADLQLIDKMANAPKHVVEFLENLSLKNSSVLKKILNNLALMKKKELNLNFLPSFDVWDREYYTARYKQSLINQKPSLNPSITNYRRFFSVGTVIQGLSRLFSSLYGLRFVPADISPGEVWHPDVNKVNVYNENDHVMGVIYFDLFARTGKTDGAAHFTIRSSRELDLTSFDDSISLGFDDATNIRVKDNKRYQIPVISLLCNFVRSSGMDPTFLDLWDVKTLFHEMGHAMHSILGHTKYQNLAGTRCATDFVELPSIIMEFFMSNPAVLPLYARYEGTEIPLPVQVLNHHNMVENSSAPLDLQSQICMAMVDQLFHSKVVLDPSFNSIDEVTNVTRKFSGFESAPPAAWYLQFSHLYGYSATYYSYIFDTVLASLIFSKLFAGNPLSREAGEKFRKAILRWGGSRSPWECVAEALEQPILATGGEEAMRRIGSEGIKATSTF.

Residues 1 to 28 (MQVRTLLTLGKKKVIGNRQCILSLYRKY) constitute a mitochondrion transit peptide. Residue His544 participates in Zn(2+) binding. Glu545 is an active-site residue. Zn(2+)-binding residues include His548 and His551.

The protein belongs to the peptidase M3 family. It depends on Zn(2+) as a cofactor.

The protein resides in the mitochondrion matrix. It catalyses the reaction Release of an N-terminal octapeptide as second stage of processing of some proteins imported into the mitochondrion.. Its function is as follows. Cleaves proteins, imported into the mitochondrion, to their mature size. While most mitochondrial precursor proteins are processed to the mature form in one step by mitochondrial processing peptidase (MPP), the sequential cleavage by MIP of an octapeptide after initial processing by MPP is a required step for a subgroup of nuclear-encoded precursor proteins destined for the matrix or the inner membrane. This chain is Mitochondrial intermediate peptidase (oct1), found in Schizosaccharomyces pombe (strain 972 / ATCC 24843) (Fission yeast).